The following is a 119-amino-acid chain: Phenol 2-monooxygenase, oxygenase component DmpO (119 aa).

As to quaternary structure, the multicomponent enzyme phenol hydroxylase is formed by DmpL (P1 component), DmpM (P2 component), DmpN (P3 component), DmpO (P4 component) and DmpP (P5 component). The oxygenase component is a dimer composed of three subunits, DmpL, DmpN and DmpO (DmpLNO).

The enzyme catalyses phenol + NADH + O2 + H(+) = catechol + NAD(+) + H2O. It functions in the pathway aromatic compound metabolism; phenol degradation. Requires DmpM for efficient turnover. The activity of DmpLNO oxygenase is inhibited by dithiothreitol (DTT) by a mechanism apparently involving H(2)O(2) generation. Part of a multicomponent enzyme which catalyzes the degradation of phenol and some of its methylated derivatives. DmpL, DmpN and DmpO form the oxygenase component of the complex. Required for growth on phenol and for in vitro phenol hydroxylase activity. This Pseudomonas sp. (strain CF600) protein is Phenol 2-monooxygenase, oxygenase component DmpO.